The following is a 393-amino-acid chain: Methylthioribose kinase (393 aa).

ATP contacts are provided by residues Asn38, Lys53, and 107 to 109; that span reads EDL. Asp225 lines the substrate pocket. 242–244 is a binding site for ATP; it reads DPE. Arg332 contacts substrate.

The protein belongs to the methylthioribose kinase family. In terms of assembly, homodimer.

It catalyses the reaction 5-(methylsulfanyl)-D-ribose + ATP = 5-(methylsulfanyl)-alpha-D-ribose 1-phosphate + ADP + H(+). It functions in the pathway amino-acid biosynthesis; L-methionine biosynthesis via salvage pathway; S-methyl-5-thio-alpha-D-ribose 1-phosphate from S-methyl-5'-thioadenosine (hydrolase route): step 2/2. Catalyzes the phosphorylation of methylthioribose into methylthioribose-1-phosphate. The chain is Methylthioribose kinase from Bacillus cereus (strain 03BB102).